The sequence spans 218 residues: uncharacterized protein (218 aa).

Residues 1–28 (MLSLQCLPPFFISVPNRSTNSCSTAPLR) constitute a chloroplast transit peptide.

The protein belongs to the SixA phosphatase family.

It is found in the plastid. The protein localises to the chloroplast. This is an uncharacterized protein from Arabidopsis thaliana (Mouse-ear cress).